We begin with the raw amino-acid sequence, 496 residues long: Glycerol kinase (496 aa).

T12 contacts ADP. The ATP site is built by T12, T13, and S14. Residue T12 coordinates sn-glycerol 3-phosphate. R16 is a binding site for ADP. Residues R82, E83, and Y134 each contribute to the sn-glycerol 3-phosphate site. Residues R82, E83, and Y134 each coordinate glycerol. H230 carries the phosphohistidine; by HPr modification. D244 provides a ligand contact to sn-glycerol 3-phosphate. D244 and Q245 together coordinate glycerol. Residues T266 and G309 each contribute to the ADP site. Residues T266, G309, Q313, and G410 each coordinate ATP. ADP-binding residues include G410 and N414.

Belongs to the FGGY kinase family. Homotetramer and homodimer (in equilibrium). The phosphoenolpyruvate-dependent sugar phosphotransferase system (PTS), including enzyme I, and histidine-containing protein (HPr) are required for the phosphorylation, which leads to the activation of the enzyme.

The catalysed reaction is glycerol + ATP = sn-glycerol 3-phosphate + ADP + H(+). It functions in the pathway polyol metabolism; glycerol degradation via glycerol kinase pathway; sn-glycerol 3-phosphate from glycerol: step 1/1. Its activity is regulated as follows. Activated by phosphorylation and inhibited by fructose 1,6-bisphosphate (FBP). Functionally, key enzyme in the regulation of glycerol uptake and metabolism. Catalyzes the phosphorylation of glycerol to yield sn-glycerol 3-phosphate. This Geobacillus kaustophilus (strain HTA426) protein is Glycerol kinase.